A 339-amino-acid polypeptide reads, in one-letter code: Uroporphyrinogen decarboxylase (339 aa).

Substrate is bound by residues 21–25 (RQAGR), Phe-40, Asp-71, Tyr-147, Ser-202, and His-315.

It belongs to the uroporphyrinogen decarboxylase family. In terms of assembly, homodimer.

It localises to the cytoplasm. The enzyme catalyses uroporphyrinogen III + 4 H(+) = coproporphyrinogen III + 4 CO2. It functions in the pathway porphyrin-containing compound metabolism; protoporphyrin-IX biosynthesis; coproporphyrinogen-III from 5-aminolevulinate: step 4/4. Functionally, catalyzes the decarboxylation of four acetate groups of uroporphyrinogen-III to yield coproporphyrinogen-III. This Helicobacter pylori (strain J99 / ATCC 700824) (Campylobacter pylori J99) protein is Uroporphyrinogen decarboxylase.